Here is a 278-residue protein sequence, read N- to C-terminus: Large ribosomal subunit protein uL2 (278 aa).

The tract at residues Ala202–Lys278 is disordered.

It belongs to the universal ribosomal protein uL2 family. In terms of assembly, part of the 50S ribosomal subunit. Forms a bridge to the 30S subunit in the 70S ribosome.

Its function is as follows. One of the primary rRNA binding proteins. Required for association of the 30S and 50S subunits to form the 70S ribosome, for tRNA binding and peptide bond formation. It has been suggested to have peptidyltransferase activity; this is somewhat controversial. Makes several contacts with the 16S rRNA in the 70S ribosome. This is Large ribosomal subunit protein uL2 from Rhizobium johnstonii (strain DSM 114642 / LMG 32736 / 3841) (Rhizobium leguminosarum bv. viciae).